A 195-amino-acid chain; its full sequence is Morphogenetic protein (195 aa).

Its function is as follows. Assembly factor active in membrane morphogenesis. The protein is Morphogenetic protein (P12) of Pseudomonas phage phi6 (Bacteriophage phi-6).